A 362-amino-acid polypeptide reads, in one-letter code: 3-isopropylmalate dehydrogenase (362 aa).

Position 78-91 (78-91) interacts with NAD(+); sequence GYKWDSLPPHQRPE. Residues R98, R108, R136, and D226 each coordinate substrate. Residues D226, D250, and D254 each coordinate Mg(2+). 284–296 contributes to the NAD(+) binding site; the sequence is GSAPDIAGLDKAN.

This sequence belongs to the isocitrate and isopropylmalate dehydrogenases family. LeuB type 1 subfamily. As to quaternary structure, homodimer. It depends on Mg(2+) as a cofactor. Requires Mn(2+) as cofactor.

Its subcellular location is the cytoplasm. It catalyses the reaction (2R,3S)-3-isopropylmalate + NAD(+) = 4-methyl-2-oxopentanoate + CO2 + NADH. It participates in amino-acid biosynthesis; L-leucine biosynthesis; L-leucine from 3-methyl-2-oxobutanoate: step 3/4. In terms of biological role, catalyzes the oxidation of 3-carboxy-2-hydroxy-4-methylpentanoate (3-isopropylmalate) to 3-carboxy-4-methyl-2-oxopentanoate. The product decarboxylates to 4-methyl-2 oxopentanoate. The sequence is that of 3-isopropylmalate dehydrogenase from Trichormus variabilis (strain ATCC 29413 / PCC 7937) (Anabaena variabilis).